A 437-amino-acid chain; its full sequence is ATP-dependent RNA helicase SUB2 (437 aa).

The span at 1–19 (MSHEAEEDLLEYSDNEQEV) shows a compositional bias: acidic residues. The tract at residues 1 to 45 (MSHEAEEDLLEYSDNEQEVQVDNKATEVNAEGNGESQAKDSDKKG) is disordered. A Q motif motif is present at residues 53-81 (TGFKDFLLKPELSRAIIDCGFEHPSEVQQ). Positions 84–259 (IPQSIHGTDV…RRFLQNPLEI (176 aa)) constitute a Helicase ATP-binding domain. 97–104 (AKSGLGKT) provides a ligand contact to ATP. Residues 206–209 (DECD) carry the DECD box motif. Residues 287 to 432 (KLAQLLDDLE…EFPEEGVDPS (146 aa)) form the Helicase C-terminal domain.

This sequence belongs to the DEAD box helicase family. DECD subfamily.

Its subcellular location is the nucleus. The enzyme catalyses ATP + H2O = ADP + phosphate + H(+). Its function is as follows. ATP-binding RNA helicase involved in transcription elongation and required for the export of mRNA out of the nucleus. SUB2 also plays a role in pre-mRNA splicing and spliceosome assembly. May be involved in rDNA and telomeric silencing, and maintenance of genome integrity. The protein is ATP-dependent RNA helicase SUB2 (SUB2) of Kluyveromyces lactis (strain ATCC 8585 / CBS 2359 / DSM 70799 / NBRC 1267 / NRRL Y-1140 / WM37) (Yeast).